The sequence spans 100 residues: Large ribosomal subunit protein uL23 (100 aa).

This sequence belongs to the universal ribosomal protein uL23 family. Part of the 50S ribosomal subunit. Contacts protein L29, and trigger factor when it is bound to the ribosome.

In terms of biological role, one of the early assembly proteins it binds 23S rRNA. One of the proteins that surrounds the polypeptide exit tunnel on the outside of the ribosome. Forms the main docking site for trigger factor binding to the ribosome. The sequence is that of Large ribosomal subunit protein uL23 from Prochlorococcus marinus (strain AS9601).